The following is a 374-amino-acid chain: Trehalose-phosphate phosphatase B (374 aa).

It belongs to the trehalose phosphatase family. Requires a divalent metal cation as cofactor. As to expression, expressed in flowers.

The enzyme catalyses alpha,alpha-trehalose 6-phosphate + H2O = alpha,alpha-trehalose + phosphate. It functions in the pathway glycan biosynthesis; trehalose biosynthesis. Removes the phosphate from trehalose 6-phosphate to produce free trehalose. Trehalose accumulation in plant may improve abiotic stress tolerance. This chain is Trehalose-phosphate phosphatase B (TPPB), found in Arabidopsis thaliana (Mouse-ear cress).